We begin with the raw amino-acid sequence, 800 residues long: Phenylalanine--tRNA ligase beta subunit (800 aa).

In terms of domain architecture, tRNA-binding spans 39–154; the sequence is TKDIKKLVVG…EAVKPGTDAL (116 aa). The B5 domain occupies 408–483; it reads SFVTPIEITA…RIYGYDEIPS (76 aa). Residues Asp461, Asp467, Glu470, and Glu471 each contribute to the Mg(2+) site. The FDX-ACB domain occupies 708-800; the sequence is PRFPGVTRDI…ALKKHGAIIR (93 aa).

This sequence belongs to the phenylalanyl-tRNA synthetase beta subunit family. Type 1 subfamily. Tetramer of two alpha and two beta subunits. Mg(2+) is required as a cofactor.

It is found in the cytoplasm. It carries out the reaction tRNA(Phe) + L-phenylalanine + ATP = L-phenylalanyl-tRNA(Phe) + AMP + diphosphate + H(+). This chain is Phenylalanine--tRNA ligase beta subunit, found in Staphylococcus epidermidis (strain ATCC 12228 / FDA PCI 1200).